The following is a 213-amino-acid chain: Cytochrome c biogenesis ATP-binding export protein CcmA (213 aa).

The ABC transporter domain occupies leucine 7–glutamate 213. Glycine 39 to threonine 46 is a binding site for ATP.

The protein belongs to the ABC transporter superfamily. CcmA exporter (TC 3.A.1.107) family. The complex is composed of two ATP-binding proteins (CcmA) and two transmembrane proteins (CcmB).

The protein resides in the cell inner membrane. The enzyme catalyses heme b(in) + ATP + H2O = heme b(out) + ADP + phosphate + H(+). In terms of biological role, part of the ABC transporter complex CcmAB involved in the biogenesis of c-type cytochromes; once thought to export heme, this seems not to be the case, but its exact role is uncertain. Responsible for energy coupling to the transport system. The polypeptide is Cytochrome c biogenesis ATP-binding export protein CcmA (Pasteurella multocida (strain Pm70)).